Consider the following 131-residue polypeptide: Large ribosomal subunit protein bL21 (131 aa).

A compositionally biased stretch (basic and acidic residues) spans 106-116; sequence TIDDMPKKEAA. The disordered stretch occupies residues 106-131; it reads TIDDMPKKEAAPAKARRSTKKAAAAE.

This sequence belongs to the bacterial ribosomal protein bL21 family. Part of the 50S ribosomal subunit. Contacts protein L20.

Functionally, this protein binds to 23S rRNA in the presence of protein L20. In Koribacter versatilis (strain Ellin345), this protein is Large ribosomal subunit protein bL21.